A 131-amino-acid chain; its full sequence is Small ribosomal subunit protein uS8 (131 aa).

It belongs to the universal ribosomal protein uS8 family. As to quaternary structure, part of the 30S ribosomal subunit. Contacts proteins S5 and S12.

One of the primary rRNA binding proteins, it binds directly to 16S rRNA central domain where it helps coordinate assembly of the platform of the 30S subunit. This Polaromonas naphthalenivorans (strain CJ2) protein is Small ribosomal subunit protein uS8.